Here is a 235-residue protein sequence, read N- to C-terminus: NADH-quinone oxidoreductase subunit C (235 aa).

The protein belongs to the complex I 30 kDa subunit family. In terms of assembly, NDH-1 is composed of 14 different subunits. Subunits NuoB, C, D, E, F, and G constitute the peripheral sector of the complex.

Its subcellular location is the cell membrane. It carries out the reaction a quinone + NADH + 5 H(+)(in) = a quinol + NAD(+) + 4 H(+)(out). Its function is as follows. NDH-1 shuttles electrons from NADH, via FMN and iron-sulfur (Fe-S) centers, to quinones in the respiratory chain. The immediate electron acceptor for the enzyme in this species is believed to be a menaquinone. Couples the redox reaction to proton translocation (for every two electrons transferred, four hydrogen ions are translocated across the cytoplasmic membrane), and thus conserves the redox energy in a proton gradient. This Mycobacterium avium (strain 104) protein is NADH-quinone oxidoreductase subunit C.